A 147-amino-acid polypeptide reads, in one-letter code: uncharacterized protein (147 aa).

The chain crosses the membrane as a helical span at residues 63 to 79; it reads LFIVACSAVFATIAYIN.

This sequence belongs to the FUN14 family.

It localises to the membrane. This is an uncharacterized protein from Schizosaccharomyces pombe (strain 972 / ATCC 24843) (Fission yeast).